A 196-amino-acid chain; its full sequence is UMP-CMP kinase (196 aa).

13-18 (GAGKGT) contributes to the ATP binding site. S33 is modified (phosphoserine). The interval 33–63 (SAGELLRDERKNPDSQYGELIEKYIKEGKIV) is NMP. Residue R39 participates in a ribonucleoside 5'-phosphate binding. An N6-acetyllysine mark is found at K43 and K55. Residue 61–63 (KIV) participates in a ribonucleoside 5'-phosphate binding. A Glycyl lysine isopeptide (Lys-Gly) (interchain with G-Cter in SUMO2) cross-link involves residue K73. 93–96 (GFPR) lines the a ribonucleoside 5'-phosphate pocket. N100 is a CMP binding site. K106 carries the post-translational modification N6-succinyllysine. The LID stretch occupies residues 133 to 143 (ERGKSSGRSDD). R134 is a binding site for ATP. R140 and R151 together coordinate a ribonucleoside 5'-phosphate. K179 lines the ATP pocket. S180 carries the phosphoserine modification.

The protein belongs to the adenylate kinase family. UMP-CMP kinase subfamily. In terms of assembly, monomer. The cofactor is Mg(2+). Ubiquitously expressed.

Its subcellular location is the nucleus. The protein resides in the cytoplasm. It catalyses the reaction CMP + ATP = CDP + ADP. It carries out the reaction dCMP + ATP = dCDP + ADP. The catalysed reaction is UMP + ATP = UDP + ADP. The enzyme catalyses a 2'-deoxyribonucleoside 5'-diphosphate + ATP = a 2'-deoxyribonucleoside 5'-triphosphate + ADP. It catalyses the reaction a ribonucleoside 5'-diphosphate + ATP = a ribonucleoside 5'-triphosphate + ADP. Its function is as follows. Catalyzes the phosphorylation of pyrimidine nucleoside monophosphates at the expense of ATP. Plays an important role in de novo pyrimidine nucleotide biosynthesis. Has preference for UMP and CMP as phosphate acceptors. Also displays broad nucleoside diphosphate kinase activity. The polypeptide is UMP-CMP kinase (Homo sapiens (Human)).